The primary structure comprises 108 residues: Mitochondrial pyruvate carrier 4 (108 aa).

A run of 3 helical transmembrane segments spans residues 19-35, 51-67, and 74-90; these read IHFW…IANI, IAVT…SMVI, and LFSV…YQLA.

This sequence belongs to the mitochondrial pyruvate carrier (MPC) (TC 2.A.105) family.

The protein resides in the mitochondrion inner membrane. Mediates the uptake of pyruvate into mitochondria. The protein is Mitochondrial pyruvate carrier 4 of Arabidopsis thaliana (Mouse-ear cress).